The sequence spans 115 residues: NADH-ubiquinone oxidoreductase chain 3 (115 aa).

A run of 3 helical transmembrane segments spans residues 3 to 23 (LIMV…VAFW), 55 to 75 (FFLV…LLPI), and 84 to 104 (INTM…GLAY).

This sequence belongs to the complex I subunit 3 family. As to quaternary structure, core subunit of respiratory chain NADH dehydrogenase (Complex I) which is composed of 45 different subunits. Interacts with TMEM186. Interacts with TMEM242.

The protein resides in the mitochondrion inner membrane. The catalysed reaction is a ubiquinone + NADH + 5 H(+)(in) = a ubiquinol + NAD(+) + 4 H(+)(out). Its function is as follows. Core subunit of the mitochondrial membrane respiratory chain NADH dehydrogenase (Complex I) which catalyzes electron transfer from NADH through the respiratory chain, using ubiquinone as an electron acceptor. Essential for the catalytic activity of complex I. The polypeptide is NADH-ubiquinone oxidoreductase chain 3 (Scotinomys teguina (Alston's brown mouse)).